The sequence spans 393 residues: NAD(P)H-quinone oxidoreductase subunit H, chloroplastic (393 aa).

The protein belongs to the complex I 49 kDa subunit family. As to quaternary structure, NDH is composed of at least 16 different subunits, 5 of which are encoded in the nucleus.

The protein localises to the plastid. It localises to the chloroplast thylakoid membrane. The catalysed reaction is a plastoquinone + NADH + (n+1) H(+)(in) = a plastoquinol + NAD(+) + n H(+)(out). It carries out the reaction a plastoquinone + NADPH + (n+1) H(+)(in) = a plastoquinol + NADP(+) + n H(+)(out). Functionally, NDH shuttles electrons from NAD(P)H:plastoquinone, via FMN and iron-sulfur (Fe-S) centers, to quinones in the photosynthetic chain and possibly in a chloroplast respiratory chain. The immediate electron acceptor for the enzyme in this species is believed to be plastoquinone. Couples the redox reaction to proton translocation, and thus conserves the redox energy in a proton gradient. The polypeptide is NAD(P)H-quinone oxidoreductase subunit H, chloroplastic (Helianthus annuus (Common sunflower)).